Reading from the N-terminus, the 173-residue chain is Bifunctional protein PyrR (173 aa).

The PRPP-binding signature appears at I93–T105.

This sequence belongs to the purine/pyrimidine phosphoribosyltransferase family. PyrR subfamily. Homodimer and homohexamer; in equilibrium.

The catalysed reaction is UMP + diphosphate = 5-phospho-alpha-D-ribose 1-diphosphate + uracil. Functionally, regulates transcriptional attenuation of the pyrimidine nucleotide (pyr) operon by binding in a uridine-dependent manner to specific sites on pyr mRNA. This disrupts an antiterminator hairpin in the RNA and favors formation of a downstream transcription terminator, leading to a reduced expression of downstream genes. Its function is as follows. Also displays a weak uracil phosphoribosyltransferase activity which is not physiologically significant. The protein is Bifunctional protein PyrR of Streptococcus equi subsp. zooepidemicus (strain H70).